Consider the following 341-residue polypeptide: D-aspartate oxidase (341 aa).

FAD contacts are provided by aspartate 36, lysine 37, threonine 43, serine 44, methionine 50, glycine 307, isoleucine 311, and serine 312. The Microbody targeting signal motif lies at serine 339 to leucine 341.

The protein belongs to the DAMOX/DASOX family. As to quaternary structure, monomer. Interacts with PEX5; the interaction is direct and required for localization of DDO to the peroxisome. Interacts with DAOA; the interaction is direct and increases the degradation rate of DDO. FAD serves as cofactor. May be S-nitrosylated. In terms of tissue distribution, expressed in epithelial cells of the proximal nephron tubules in the renal cortex (at protein level). In the brain, expressed in the frontal, temporal, and occipital lobes of the cortex, hippocampus, striatum, diencephalon, brainstem, cerebellum, spinal cord, plexus choroiderus and ependyma (at protein level). Expression is increased in the prefrontal cortex of schizophrenic patients. Levels are normal in the superior frontal gyrus of patients with Alzheimer's disease.

It is found in the peroxisome matrix. It localises to the cytoplasm. Its subcellular location is the cytosol. The enzyme catalyses D-aspartate + O2 + H2O = oxaloacetate + H2O2 + NH4(+). It carries out the reaction D-glutamate + O2 + H2O = H2O2 + 2-oxoglutarate + NH4(+). With respect to regulation, inhibited by the benzodiazepine olanzapine. Inhibited by aminooxyacetic acid, thiolactomycin, malonate and meso-tartrate. Clozapine, haloperidol and chlorpromazine have no effect on activity. Not inhibited by sodium, potassium, magnesium, iron, calcium, cobalt, copper, nickel, manganese or zinc ions. Not inhibited by AMP, ADP, ATP, or cAMP. Not inhibited by pyridoxal 5'-phosphate. Its function is as follows. Selectively catalyzes the oxidative deamination of acidic amino acids. Suppresses the level of D-aspartate in the brain, an amino acid that can act as an agonist for glutamate receptors. Protects the organism from the toxicity of D-amino acids. May also function in the intestine. In Homo sapiens (Human), this protein is D-aspartate oxidase (DDO).